Consider the following 525-residue polypeptide: MDVDLLPLRKRITNTFKLCGFLIRSENSSYLAEQLLPFDAAERDKWLTVITENLQSQKLLTPHVERAALEKAINELNRVGLDEGETVFALIDAFTVPRFRYNQRIKKFELDTQPRQLLTAPRMKSDYMQQRYAMLLQKTLRHDLFAPAVIQDGVGAEAQAKKFKLQFAENLLATSAMKEAVVLGLLTQLKEGKFYVEDPTGCVQLDLTGARFHAGFFCEGCFVLAEGNYNNGVLKVDGLGFPPAEPANSSRAFFGTANTWGGESAKLLKYSAGLQELERTNTETTIVFLSDVRLDLPVVMEKLRQLFVGYDSCPPQAIVLMGPFTASTRNHHELRHHLDALGGLAAGCEQLKKQTDLILVPSSEDPTAPNILPRAPIPECLAAGLLKAWPRTQLATNPCRLQYCTQQIVVCRLDLMAKFCRNTLHFPEDTSQIEQHFARTIVCQGHLVPIHPIAMPVHWDYDPALWLYPLPDLIVMGDSCQSFSSSQHGCTVLNTGSFVKSKFAFKVYIPATRTIEDSEIPDELE.

This sequence belongs to the DNA polymerase epsilon subunit B family. Component of the epsilon DNA polymerase complex consisting of four subunits: the catalytic subunit PolE1/DNApol-epsilon255 and the accessory subunits PolE2/DNApol-epsilon58, Chrac-14/DNApolE3 and PolE4.

It localises to the nucleus. Functionally, accessory component of the DNA polymerase epsilon complex. Participates in DNA repair and in chromosomal DNA replication. Has a role in the entrance and progression through S phase. Has a role in endoreplication. Essential for viability and tissue development. The polypeptide is DNA polymerase epsilon subunit 2 (Drosophila melanogaster (Fruit fly)).